Consider the following 380-residue polypeptide: GDP-mannose:cellobiosyl-diphosphopolyprenol alpha-mannosyltransferase (380 aa).

Belongs to the glycosyltransferase group 1 family. Glycosyltransferase 4 subfamily.

The enzyme catalyses beta-D-Glc-(1-&gt;4)-alpha-D-Glc-di-trans,octa-cis-undecaprenyl diphosphate + GDP-alpha-D-mannose = alpha-D-Man-(1-&gt;3)-beta-D-Glc-(1-&gt;4)-alpha-D-Glc-1-di-trans,octa-cis-undecaprenyl diphosphate + GDP + H(+). Its function is as follows. Involved in the biosynthesis of the exopolysaccharide xanthan, a polymer that is comprised of repeating pentasaccharide units with the structure of a beta-(1,4)-linked D-glucose backbone with trisaccharide side chains composed of mannose-beta-(1,4)-glucuronic acid-beta-(1,2)-mannose attached to alternate glucose residues in the backbone by alpha-(1,3) linkages. Xanthan is involved in pathogenicity but has also been used in a variety of applications as a specialty polymer for commercial applications, including food additives, where they act as viscosifying, stabilizing, emulsifying, or gelling agents. The protein is GDP-mannose:cellobiosyl-diphosphopolyprenol alpha-mannosyltransferase (gumH) of Xanthomonas oryzae pv. oryzae (strain PXO99A).